The following is a 677-amino-acid chain: MGSGYQLLQLPRERFRKTSFLVWVIILFQRAISMPLGIVTNSTLKATEIDQLVCRDKLSSTSQLKSVGLNLEGNGIATDVPSATKRWGFRSGVPPKVVSYEAGEWAENCYNLEIKKSDGSECLPLPPDGVRGFPRCRYVHKVQGTGPCPGDLAFHKNGAFFLYDRLASTVIYRGTTFAEGVVAFLILSEPKKHFWKATPAHEPVNTTDDSTSYYMTLTLSYEMSNFGGNESNTLFKVDNHTYVQLDRPHTPQFLVQLNETLRRNNRLSNSTGRLTWTLDPKIEPDVGEWAFWETKKNFSQQLHGENLHFQILSTHTNNSSDQSPAGTVQGKISYHPPANNSELVPTDSPPVVSVLTAGRTEEMSTQGLTNGETITGFTANPMTTTIAPSPTMTSEVDNNVPSEQPNNTASIEDSPPSASNETIYHSEMDPIQGSNNSAQSPQTKTTPAPTTSPMTQDPQETANSSKPGTSPGSAAGPSQPGLTINTVSKVADSLSPTRKQKRSVRQNTANKCNPDLYYWTAVDEGAAVGLAWIPYFGPAAEGIYIEGVMHNQNGLICGLRQLANETTQALQLFLRATTELRTYSLLNRKAIDFLLQRWGGTCRILGPSCCIEPHDWTKNITDEINQIKHDFIDNPLPDHGDDLNLWTGWRQWIPAGIGIIGVIIAIIALLCICKILC.

An N-terminal signal peptide occupies residues 1–33 (MGSGYQLLQLPRERFRKTSFLVWVIILFQRAIS). At 34-651 (MPLGIVTNST…DLNLWTGWRQ (618 aa)) the chain is on the extracellular side. N-linked (GlcNAc...) asparagine; by host glycosylation is present at Asn41. Cystine bridges form between Cys54–Cys610, Cys109–Cys136, Cys122–Cys148, Cys512–Cys557, and Cys602–Cys609. Positions 55–202 (RDKLSSTSQL…HFWKATPAHE (148 aa)) are receptor-binding. Asn205, Asn229, Asn239, Asn258, Asn269, Asn297, Asn317, Asn318, Asn339, Asn406, Asn420, Asn435, and Asn463 each carry an N-linked (GlcNAc...) asparagine; by host glycan. The segment at 306-486 (NLHFQILSTH…PSQPGLTINT (181 aa)) is mucin-like region. The span at 315–326 (HTNNSSDQSPAG) shows a compositional bias: polar residues. Disordered regions lie at residues 315–349 (HTNNSSDQSPAGTVQGKISYHPPANNSELVPTDSP) and 361–484 (EEMS…GLTI). Polar residues-rich tracts occupy residues 363–423 (MSTQ…NETI) and 432–472 (QGSN…TSPG). Positions 525-540 (GAAVGLAWIPYFGPAA) are fusion peptide. The stretch at 555 to 596 (LICGLRQLANETTQALQLFLRATTELRTYSLLNRKAIDFLLQ) forms a coiled coil. Residue Asn564 is glycosylated (N-linked (GlcNAc...) asparagine; by host). Residues 616 to 635 (WTKNITDEINQIKHDFIDNP) are a coiled coil. N-linked (GlcNAc...) asparagine; by host glycosylation occurs at Asn619. Residues 652–672 (WIPAGIGIIGVIIAIIALLCI) traverse the membrane as a helical segment. Residues Cys671 and Cys673 are each lipidated (S-palmitoyl cysteine; by host). Residues 673–677 (CKILC) lie on the Cytoplasmic side of the membrane.

The protein belongs to the filoviruses glycoprotein family. As to quaternary structure, homotrimer; each monomer consists of a GP1 and a GP2 subunit linked by disulfide bonds. The resulting peplomers (GP1,2) protrude from the virus surface as spikes. Interacts with host integrin alpha-V/ITGAV. Interacts with host CLEC10A. Binds also to host CD209 and CLEC4M/DC-SIGN(R). Interacts with host FOLR1. Interacts with BST2; this interaction inhibits the antiviral effect of BST2 and this allows viral release from infected cells. Interacts with host FCN1; this interaction enhances viral entry. Interacts with host TLR4; this interaction induces cell death in T-lymphocytes or proinflammatory cytokines and SOCS1 production in monocytes. Interacts with host entry receptor NPC1. In terms of assembly, GP1 and GP2delta are part of GP1,2delta soluble complexes released by ectodomain shedding. In terms of processing, the signal peptide region modulates GP's high mannose glycosylation, thereby determining the efficiency of the interactions with DC-SIGN(R). Post-translationally, N-glycosylated. O-glycosylated in the mucin-like region. In terms of processing, palmitoylation of GP2 is not required for its function. Post-translationally, specific enzymatic cleavages in vivo yield mature proteins. The precursor is processed into GP1 and GP2 by host cell furin in the trans Golgi, and maybe by other host proteases, to yield the mature GP1 and GP2 proteins. The cleavage site corresponds to the furin optimal cleavage sequence [KR]-X-[KR]-R. This cleavage does not seem to be required for function. After the internalization of the virus into cell endosomes, GP1 C-terminus is removed by the endosomal proteases cathepsin B, cathepsin L, or both, leaving a 19-kDa N-terminal fragment which is further digested by cathepsin B. Proteolytic processing of GP1,2 by host ADAM17 can remove the transmembrane anchor of GP2 and leads to shedding of complexes consisting in GP1 and truncated GP2 (GP1,2delta).

Its subcellular location is the virion membrane. The protein localises to the host cell membrane. The protein resides in the secreted. Functionally, trimeric GP1,2 complexes form the virion surface spikes and mediate the viral entry processes, with GP1 acting as the receptor-binding subunit and GP2 as the membrane fusion subunit. At later times of infection, down-regulates the expression of various host cell surface molecules that are essential for immune surveillance and cell adhesion. Down-modulates several integrins including ITGA1, ITGA2, ITGA3, ITGA4, ITGA5, ITGA6, ITGAV and ITGB1. This decrease in cell adhesion molecules may lead to cell detachment, contributing to the disruption of blood vessel integrity and hemorrhages developed during infection (cytotoxicity). Interacts with host TLR4 and thereby stimulates the differentiation and activation of monocytes leading to bystander death of T-lymphocytes. Down-regulates as well the function of host natural killer cells. Counteracts the antiviral effect of host BST2/tetherin that restricts release of progeny virions from infected cells. However, cooperates with VP40 and host BST2 to activate canonical NF-kappa-B pathway in a manner dependent on neddylation. Functions as a decoy for anti-GP1,2 antibodies thereby contributing to viral immune evasion. Interacts and activates host macrophages and dendritic cells inducing up-regulation of cytokine transcription. This effect is mediated throught activation of host TLR4. Its function is as follows. Responsible for binding to the receptor(s) on target cells. Interacts with CD209/DC-SIGN and CLEC4M/DC-SIGNR which act as cofactors for virus entry into dendritic cells (DCs) and endothelial cells. Binding to the macrophage specific lectin CLEC10A also seems to enhance virus infectivity. Interaction with FOLR1/folate receptor alpha may be a cofactor for virus entry in some cell types, although results are contradictory. Members of the Tyro3 receptor tyrosine kinase family also seem to be cell entry factors in filovirus infection. Once attached, the virions are internalized through clathrin-dependent endocytosis and/or macropinocytosis. After internalization of the virus into the endosomes of the host cell, proteolysis of GP1 by two cysteine proteases, CTSB/cathepsin B and CTSL/cathepsin L removes the glycan cap and allows GP1 binding to the host entry receptor NPC1. NPC1-binding, Ca(2+) and acidic pH induce a conformational change of GP2, which unmasks its fusion peptide and permit membranes fusion. In terms of biological role, acts as a class I viral fusion protein. Under the current model, the protein has at least 3 conformational states: pre-fusion native state, pre-hairpin intermediate state, and post-fusion hairpin state. During viral and target cell membrane fusion, the coiled coil regions (heptad repeats) assume a trimer-of-hairpins structure, positioning the fusion peptide in close proximity to the C-terminal region of the ectodomain. The formation of this structure appears to drive apposition and subsequent fusion of viral and target cell membranes. Responsible for penetration of the virus into the cell cytoplasm by mediating the fusion of the membrane of the endocytosed virus particle with the endosomal membrane. Low pH in endosomes induces an irreversible conformational change in GP2, releasing the fusion hydrophobic peptide. The polypeptide is Envelope glycoprotein (GP) (Reston ebolavirus (strain Reston-89) (REBOV)).